Consider the following 93-residue polypeptide: Alpha-defensin 15 (93 aa).

The signal sequence occupies residues 1–19 (MKTLVLLSALVLLAFQVQA). The propeptide occupies 20–58 (DPIQNTDEETKTEEQPGEDDQAVSVSFGDPEGSSLQEES). The disordered stretch occupies residues 23 to 56 (QNTDEETKTEEQPGEDDQAVSVSFGDPEGSSLQE). 3 disulfide bridges follow: C64-C92, C66-C81, and C71-C91.

It belongs to the alpha-defensin family. In terms of tissue distribution, paneth cells of the small bowel.

The protein resides in the secreted. Functionally, probably contributes to the antimicrobial barrier function of the small bowel mucosa. In Mus musculus (Mouse), this protein is Alpha-defensin 15 (Defa15).